A 352-amino-acid chain; its full sequence is Aromatic amino acid aminotransferase (352 aa).

An N6-(pyridoxal phosphate)lysine modification is found at Lys-217.

The protein belongs to the class-II pyridoxal-phosphate-dependent aminotransferase family. In terms of assembly, homodimer. Pyridoxal 5'-phosphate is required as a cofactor.

The catalysed reaction is an aromatic L-alpha-amino acid + 2-oxoglutarate = an aromatic oxo-acid + L-glutamate. In terms of biological role, aminotransferase that catalyzes the conversion of aromatic amino acids and 2-oxoglutarate into corresponding aromatic oxo acids and L-glutamate. In Cutibacterium acnes (strain DSM 16379 / KPA171202) (Propionibacterium acnes), this protein is Aromatic amino acid aminotransferase.